The primary structure comprises 404 residues: Glutamyl-tRNA reductase (404 aa).

Residues Thr-47–Arg-50, Ser-94, Glu-99–Glu-101, and Gln-105 each bind substrate. Cys-48 acts as the Nucleophile in catalysis. Gly-174–Gly-179 serves as a coordination point for NADP(+).

As to quaternary structure, homotetramer.

It catalyses the reaction (S)-4-amino-5-oxopentanoate + tRNA(Glu) + NADP(+) = L-glutamyl-tRNA(Glu) + NADPH + H(+). It participates in porphyrin-containing compound metabolism; protoporphyrin-IX biosynthesis; 5-aminolevulinate from L-glutamyl-tRNA(Glu): step 1/2. With respect to regulation, inhibited by heavy metal compounds, Zn(2+), and heme. Also competitively inhibited by glutamycin. Catalyzes the NADPH-dependent reduction of glutamyl-tRNA(Glu) to glutamate 1-semialdehyde (GSA). In the absence of NADPH, exhibits substrate esterase activity, leading to the release of glutamate from tRNA. The sequence is that of Glutamyl-tRNA reductase (hemA) from Methanopyrus kandleri (strain AV19 / DSM 6324 / JCM 9639 / NBRC 100938).